Here is a 456-residue protein sequence, read N- to C-terminus: GTPase Der (456 aa).

EngA-type G domains follow at residues 3-167 (FTIA…PPSD) and 185-360 (IRVA…AVWN). GTP-binding positions include 9 to 16 (GRPNVGKS), 56 to 60 (DTAGL), and 119 to 122 (NKSE). The disordered stretch occupies residues 162-181 (IVPPSDDEDDEREETDEERA). The segment covering 166–178 (SDDEDDEREETDE) has biased composition (acidic residues). Residues 191 to 198 (GRPNAGKS), 238 to 242 (DTAGL), and 303 to 306 (NKWD) each bind GTP. In terms of domain architecture, KH-like spans 361–445 (RRVPTAALNR…PVRITLREKA (85 aa)).

This sequence belongs to the TRAFAC class TrmE-Era-EngA-EngB-Septin-like GTPase superfamily. EngA (Der) GTPase family. As to quaternary structure, associates with the 50S ribosomal subunit.

Its function is as follows. GTPase that plays an essential role in the late steps of ribosome biogenesis. The protein is GTPase Der of Bradyrhizobium sp. (strain ORS 278).